The chain runs to 492 residues: T-box transcription factor TBX5-A (492 aa).

The interval 1–43 is disordered; the sequence is MADSEDTFRLQNSPSDSEPKDLQNEGKSDKQNAAVSKSPSSQT. Residues 17–30 show a composition bias toward basic and acidic residues; that stretch reads SEPKDLQNEGKSDK. Residues 31–43 show a composition bias toward polar residues; it reads QNAAVSKSPSSQT. The segment at residues 62–237 is a DNA-binding region (T-box); it reads LWTKFHEVGT…NNPFAKGFRG (176 aa). The interval 331 to 352 is disordered; that stretch reads AGEHPYKKPYVESSSSEDDHYY.

As to quaternary structure, monomer. Homodimer (via the T-box); binds DNA as homodimer. As to expression, expressed in the dorsal optic cup of developing eye, pectoral fin buds and heart. At 31 hpf, when the pectoral fin buds have begun bulging outwards, restricted expression is detected throughout the mesenchyme of the early fin buds and these high levels of expression continue until later stages.

The protein resides in the nucleus. It localises to the cytoplasm. Functionally, required for pectoral fin formation. Together with tbx5b, involved in eye and heart development. Required for the looping stage of heart development. May bind to the core DNA motif of promoters. This chain is T-box transcription factor TBX5-A (tbx5a), found in Danio rerio (Zebrafish).